Here is a 602-residue protein sequence, read N- to C-terminus: Proteasome-associated ATPase (602 aa).

The span at 1–17 shows a compositional bias: low complexity; it reads MSGPRSGSGSDGSTGRP. The segment at 1 to 31 is disordered; that stretch reads MSGPRSGSGSDGSTGRPGDAESRRSAYEKET. Positions 18 to 31 are enriched in basic and acidic residues; that stretch reads GDAESRRSAYEKET. Residues 19 to 106 are a coiled coil; sequence DAESRRSAYE…LKEEVDRLAQ (88 aa). Residue 289-294 coordinates ATP; sequence GCGKTL. Residues 601–602 form a docks into pockets in the proteasome alpha-ring region; the sequence is YL.

It belongs to the AAA ATPase family. As to quaternary structure, homohexamer. Assembles into a hexameric ring structure that caps the 20S proteasome core. Strongly interacts with the prokaryotic ubiquitin-like protein Pup through a hydrophobic interface; the interacting region of ARC lies in its N-terminal coiled-coil domain. There is one Pup binding site per ARC hexamer ring. Upon ATP-binding, the C-terminus of ARC interacts with the alpha-rings of the proteasome core, possibly by binding to the intersubunit pockets.

Its pathway is protein degradation; proteasomal Pup-dependent pathway. Its function is as follows. ATPase which is responsible for recognizing, binding, unfolding and translocation of pupylated proteins into the bacterial 20S proteasome core particle. May be essential for opening the gate of the 20S proteasome via an interaction with its C-terminus, thereby allowing substrate entry and access to the site of proteolysis. Thus, the C-termini of the proteasomal ATPase may function like a 'key in a lock' to induce gate opening and therefore regulate proteolysis. The protein is Proteasome-associated ATPase of Frankia casuarinae (strain DSM 45818 / CECT 9043 / HFP020203 / CcI3).